Reading from the N-terminus, the 255-residue chain is Hydroxyacylglutathione hydrolase (255 aa).

Residues H56, H58, D60, H61, H114, D133, and H171 each contribute to the Zn(2+) site.

This sequence belongs to the metallo-beta-lactamase superfamily. Glyoxalase II family. Monomer. It depends on Zn(2+) as a cofactor.

The enzyme catalyses an S-(2-hydroxyacyl)glutathione + H2O = a 2-hydroxy carboxylate + glutathione + H(+). Its pathway is secondary metabolite metabolism; methylglyoxal degradation; (R)-lactate from methylglyoxal: step 2/2. Its function is as follows. Thiolesterase that catalyzes the hydrolysis of S-D-lactoyl-glutathione to form glutathione and D-lactic acid. The polypeptide is Hydroxyacylglutathione hydrolase (Nitrobacter hamburgensis (strain DSM 10229 / NCIMB 13809 / X14)).